The following is a 200-amino-acid chain: MDFILNISVKMEVIFKTDLRSSSQVVFHAGSLYTWFSIEIINSGRIVTTAIKTLLNTVKYDIVRSARVYAGQGYTEQQAQEEWNMILHVLFEEETESSASLESIHEKNDHEKNDHEIDECTSSFETLFEQEPSSTETPKNAKLYALAQKTVQHIEQYGKAPDFNKIIRAHNFIQTIHGTPLKEEEKEEVRLMVIKLLKKK.

This sequence belongs to the asfivirus phosphoprotein p30 family. As to quaternary structure, oligomer. Interacts with host HNRNPK. Phosphorylated on serine residues in the 115 N-terminal amino acids.

It is found in the host cytoplasm. It localises to the host nucleus. The protein resides in the virion. Its function is as follows. Modifies the subcellular distribution of heterogeneous nuclear ribonucleoprotein K (HNRNPK) and may contribute to modulate HNRNPK functions related to processing and export of mRNAs during ASFV infection. Necessary for virus internalization. The protein is Phosphoprotein p30 of African swine fever virus (isolate Tick/Malawi/Lil 20-1/1983) (ASFV).